The primary structure comprises 175 residues: Ribosome maturation factor RimM (175 aa).

The PRC barrel domain maps to glutamate 96–phenylalanine 175.

Belongs to the RimM family. Binds ribosomal protein uS19.

It is found in the cytoplasm. In terms of biological role, an accessory protein needed during the final step in the assembly of 30S ribosomal subunit, possibly for assembly of the head region. Essential for efficient processing of 16S rRNA. May be needed both before and after RbfA during the maturation of 16S rRNA. It has affinity for free ribosomal 30S subunits but not for 70S ribosomes. The chain is Ribosome maturation factor RimM from Haemophilus influenzae (strain PittEE).